Here is a 1332-residue protein sequence, read N- to C-terminus: Abscisic-aldehyde oxidase (1332 aa).

Positions 1-88 (MDLEFAVNGE…GCSITTSEGL (88 aa)) constitute a 2Fe-2S ferredoxin-type domain. Positions 40, 45, and 48 each coordinate [2Fe-2S] cluster. In terms of domain architecture, FAD-binding PCMH-type spans 219 to 400 (SDHLKYRWTT…LKVEIPSWTA (182 aa)).

Belongs to the xanthine dehydrogenase family. As to quaternary structure, aldehyde oxidases (AO) are homodimers and heterodimers of AO subunits. AO-delta is a AAO3 homodimer. AAO3 also forms a dimer with AAO2. Interacts with PUB44, and this interaction probably results in targeting of this protein to the proteasome. [2Fe-2S] cluster is required as a cofactor. It depends on FAD as a cofactor. Mo-molybdopterin serves as cofactor. As to expression, expressed in vascular tissues of all organs, particularly in phloem companion cells and xylem parenchymatic cells. Highly expressed in roots and rosettes, and to lower extent in seedlings, stems and flowers. Expressed at very low levels in siliques and dry seeds. Also detected in root dividing cells (tips and primordia), in mesophyll cells and inside the guard cells.

The protein resides in the cytoplasm. The catalysed reaction is 2-cis-(+)-abscisic aldehyde + O2 + H2O = 2-cis-(+)-abscisate + H2O2 + H(+). The enzyme catalyses 1-naphthaldehyde + O2 + H2O = 1-naphthoate + H2O2 + H(+). It carries out the reaction indole-3-acetaldehyde + O2 + H2O = (indol-3-yl)acetate + H2O2 + H(+). Functionally, in higher plants aldehyde oxidases (AO) appear to be homo- and heterodimeric assemblies of AO subunits with probably different physiological functions. AO-delta may be involved in the last step of abscisic acid biosynthesis, at least in leaves and seeds. In vitro, AO-delta oxidizes abscisic aldehyde to abscisic acid (ABA). In vitro, AO-delta also uses 1-naphthaldehyde, indole-3-aldehyde (IAld), benzaldehyde and cinnamaldehyde as substrate; the AAO2-AAO3 dimer also uses abscisic aldehyde as substrate. The protein is Abscisic-aldehyde oxidase (AAO3) of Arabidopsis thaliana (Mouse-ear cress).